A 467-amino-acid polypeptide reads, in one-letter code: Tyrosine phenol-lyase (467 aa).

The residue at position 268 (K268) is an N6-(pyridoxal phosphate)lysine.

It belongs to the beta-eliminating lyase family. In terms of assembly, homotetramer. The cofactor is pyridoxal 5'-phosphate.

It catalyses the reaction L-tyrosine + H2O = phenol + pyruvate + NH4(+). The protein is Tyrosine phenol-lyase of Nostoc punctiforme (strain ATCC 29133 / PCC 73102).